A 79-amino-acid chain; its full sequence is Large ribosomal subunit protein uL29 (79 aa).

The protein belongs to the universal ribosomal protein uL29 family.

In Nocardia farcinica (strain IFM 10152), this protein is Large ribosomal subunit protein uL29.